Here is a 151-residue protein sequence, read N- to C-terminus: Caveolin-3 (151 aa).

The Cytoplasmic segment spans residues 1–83; that stretch reads MMAEEHTDLE…RLLSTLLGVP (83 aa). Residue lysine 38 forms a Glycyl lysine isopeptide (Lys-Gly) (interchain with G-Cter in SUMO3) linkage. The required for interaction with DAG1 stretch occupies residues 64 to 114; that stretch reads TFTVSKYWCYRLLSTLLGVPLALLWGFLFACISFCHIWAVVPCIKSYLIEI. Positions 84-104 form an intramembrane region, helical; that stretch reads LALLWGFLFACISFCHIWAVV. Residues 105 to 151 lie on the Cytoplasmic side of the membrane; sequence PCIKSYLIEIQCISHIYSLCIRTFCNPLFAALGQVCSSIKVVLRKEV.

Belongs to the caveolin family. Homooligomer. Interacts with DLG1 and KCNA5; forms a ternary complex. Interacts with TRIM72. Interacts with MUSK; may regulate MUSK signaling. Interacts with DAG1 (via its C-terminal); the interaction prevents binding of DAG1 with DMD. Interacts with DYSF. Interacts with POPDC1. Interacts with CAVIN1 and CAVIN2. Interacts with CAVIN4. In terms of processing, sumoylation with SUMO3 by PIAS4 may reduce agonist-induced internalization and desensitization of adrenergic receptor ABRD2. In terms of tissue distribution, expressed predominantly in muscle.

The protein resides in the golgi apparatus membrane. It is found in the cell membrane. Its subcellular location is the membrane. It localises to the caveola. The protein localises to the sarcolemma. Its function is as follows. May act as a scaffolding protein within caveolar membranes. Interacts directly with G-protein alpha subunits and can functionally regulate their activity. May also regulate voltage-gated potassium channels. Plays a role in the sarcolemma repair mechanism of both skeletal muscle and cardiomyocytes that permits rapid resealing of membranes disrupted by mechanical stress. Mediates the recruitment of CAVIN2 and CAVIN3 proteins to the caveolae. The chain is Caveolin-3 (CAV3) from Homo sapiens (Human).